The following is an 84-amino-acid chain: Putative movement protein (84 aa).

A helical membrane pass occupies residues 15–35 (ALHGILVAFIAVLCLIGCLWA).

Interacts with the capsid protein (CP). Part of a MP-CP-viral DNA complex.

It localises to the host membrane. Involved in the viral transport within, and between cells. The sequence is that of Putative movement protein from Miscanthus streak virus (isolate 91) (MiSV).